Consider the following 447-residue polypeptide: Phosphoglucosamine mutase (447 aa).

S104 (phosphoserine intermediate) is an active-site residue. 4 residues coordinate Mg(2+): S104, D243, D245, and D247. At S104 the chain carries Phosphoserine.

This sequence belongs to the phosphohexose mutase family. Requires Mg(2+) as cofactor. In terms of processing, activated by phosphorylation.

The enzyme catalyses alpha-D-glucosamine 1-phosphate = D-glucosamine 6-phosphate. In terms of biological role, catalyzes the conversion of glucosamine-6-phosphate to glucosamine-1-phosphate. This Corynebacterium diphtheriae (strain ATCC 700971 / NCTC 13129 / Biotype gravis) protein is Phosphoglucosamine mutase.